The primary structure comprises 571 residues: Mannan endo-1,4-beta-mannosidase B (571 aa).

Positions 1-19 (MNSLSLLLFCIFFVFSTFA) are cleaved as a signal peptide. The region spanning 22 to 141 (VYYEAENGKL…WMWVDAFVIN (120 aa)) is the CBM6 domain. In terms of domain architecture, GH26 spans 165 to 459 (PAAKKLYDFL…FTHKTVMNMD (295 aa)). Trp-286 serves as a coordination point for substrate. The active-site Proton donor is the Glu-319. Substrate-binding residues include Trp-324 and Tyr-379. Glu-407 functions as the Nucleophile in the catalytic mechanism. CBM10 domains lie at 491 to 527 (ECFSIPLGYPCCKGNTVVYTDNDGDWGVENNEWCGIG) and 534 to 571 (VCWSEALGYPCCVSSSDVYYTDNDGEWGVENGDWCGII).

The protein belongs to the glycosyl hydrolase 26 family.

The enzyme catalyses Random hydrolysis of (1-&gt;4)-beta-D-mannosidic linkages in mannans, galactomannans and glucomannans.. This is Mannan endo-1,4-beta-mannosidase B (MANB) from Piromyces sp.